The primary structure comprises 160 residues: Adenosine 5'-monophosphoramidase HINT3 (160 aa).

One can recognise an HIT domain in the interval 24 to 132; that stretch reads IFCTIAKGDD…LAPYSQLYKW (109 aa). AMP is bound by residues 50–51 and 119–121; these read DI and HLH. The Histidine triad motif motif lies at 117-121; it reads HLHLH. His-119 (tele-AMP-histidine intermediate) is an active-site residue.

It belongs to the HINT family. In terms of assembly, forms dimers to octamers and even larger oligomer.

The protein localises to the cytoplasm. It localises to the nucleus. The enzyme catalyses adenosine 5'-phosphoramidate + H2O = AMP + NH4(+). Exhibits adenosine 5'-monophosphoramidase activity, hydrolyzing purine nucleotide phosphoramidates with a single phosphate group such as adenosine 5'monophosphoramidate (AMP-NH2) to yield AMP and NH2. Hydrolyzes lysyl-AMP (AMP-N-epsilon-(N-alpha-acetyl lysine methyl ester)) generated by lysine tRNA ligase. This chain is Adenosine 5'-monophosphoramidase HINT3 (hint3), found in Danio rerio (Zebrafish).